A 107-amino-acid polypeptide reads, in one-letter code: Iron-binding protein IscA (107 aa).

Cys-35, Cys-99, and Cys-101 together coordinate Fe cation.

The protein belongs to the HesB/IscA family. Homodimer; may form tetramers and higher multimers. Fe cation is required as a cofactor.

Is able to transfer iron-sulfur clusters to apo-ferredoxin. Multiple cycles of [2Fe2S] cluster formation and transfer are observed, suggesting that IscA acts catalytically. Recruits intracellular free iron so as to provide iron for the assembly of transient iron-sulfur cluster in IscU in the presence of IscS, L-cysteine and the thioredoxin reductase system TrxA/TrxB. The sequence is that of Iron-binding protein IscA from Salmonella agona (strain SL483).